The primary structure comprises 167 residues: Bacterial non-heme ferritin (167 aa).

A Ferritin-like diiron domain is found at 1–145 (MLSKDIIKLL…DILDKIELIG (145 aa)). Residues Glu-17, Glu-50, His-53, Glu-94, and Gln-127 each contribute to the Fe cation site.

The protein belongs to the ferritin family. Prokaryotic subfamily. Homooligomer of 24 subunits that assemble into a spherical protein shell (12 +/- 1 nM diameter) that can sequester at least 2000 iron atoms.

The protein localises to the cytoplasm. The enzyme catalyses 4 Fe(2+) + O2 + 6 H2O = 4 iron(III) oxide-hydroxide + 12 H(+). In terms of biological role, iron-storage protein. In Helicobacter pylori (strain J99 / ATCC 700824) (Campylobacter pylori J99), this protein is Bacterial non-heme ferritin (ftnA).